The following is a 124-amino-acid chain: Large ribosomal subunit protein uL22 (124 aa).

This sequence belongs to the universal ribosomal protein uL22 family. Part of the 50S ribosomal subunit.

In terms of biological role, this protein binds specifically to 23S rRNA; its binding is stimulated by other ribosomal proteins, e.g. L4, L17, and L20. It is important during the early stages of 50S assembly. It makes multiple contacts with different domains of the 23S rRNA in the assembled 50S subunit and ribosome. Functionally, the globular domain of the protein is located near the polypeptide exit tunnel on the outside of the subunit, while an extended beta-hairpin is found that lines the wall of the exit tunnel in the center of the 70S ribosome. The sequence is that of Large ribosomal subunit protein uL22 from Macrococcus caseolyticus (strain JCSC5402) (Macrococcoides caseolyticum).